We begin with the raw amino-acid sequence, 537 residues long: Methionine--tRNA ligase (537 aa).

A 'HIGH' region motif is present at residues 11 to 21 (AYPNAAPHIGH). The 'KMSKS' region motif lies at 301–305 (KMSKS). Position 304 (Lys304) interacts with ATP. Residues 503-537 (PPPTGVFPRYQPSEIEGADPVKSSSKRREHNKRRE) are disordered. The segment covering 526–537 (SSKRREHNKRRE) has biased composition (basic residues).

It belongs to the class-I aminoacyl-tRNA synthetase family. MetG type 2B subfamily. As to quaternary structure, monomer.

It is found in the cytoplasm. The catalysed reaction is tRNA(Met) + L-methionine + ATP = L-methionyl-tRNA(Met) + AMP + diphosphate. Functionally, is required not only for elongation of protein synthesis but also for the initiation of all mRNA translation through initiator tRNA(fMet) aminoacylation. The protein is Methionine--tRNA ligase of Mycobacterium leprae (strain TN).